A 776-amino-acid polypeptide reads, in one-letter code: U3 small nucleolar RNA-associated protein 4 (776 aa).

WD repeat units lie at residues 35 to 40, 132 to 169, 178 to 214, 230 to 266, 271 to 308, and 417 to 452; these read RCRFVD, LPLR…VLID, EHDT…RIWS, KVDK…KFWD, TLNQ…FQFS, and VCKL…KVFH.

As to quaternary structure, interacts with snoRNA U3. Interacts with MPP10. Component of the ribosomal small subunit (SSU) processome composed of at least 40 protein subunits and snoRNA U3. In the absence of snoRNA3, forms a complex with other t-UTPs. This complex can associate with pre-18S ribosomal RNAs.

The protein localises to the nucleus. It is found in the nucleolus. In terms of biological role, involved in nucleolar processing of pre-18S ribosomal RNA. Required for optimal pre-ribosomal RNA transcription by RNA polymerase I together with a subset of U3 proteins required for transcription (t-UTPs). The polypeptide is U3 small nucleolar RNA-associated protein 4 (UTP4) (Saccharomyces cerevisiae (strain ATCC 204508 / S288c) (Baker's yeast)).